Reading from the N-terminus, the 994-residue chain is Chromatin modification-related protein vid21 (994 aa).

Disordered stretches follow at residues 122–275 and 288–308; these read PDNL…APPV and PKVD…ENDV. 5 stretches are compositionally biased toward basic and acidic residues: residues 158-171, 178-191, 204-233, 254-265, and 288-305; these read TIHK…KETI, KEVE…EEKG, LTEE…KEHE, VESKEVKKKEVS, and PKVD…KVTE. A phosphoserine mark is found at serine 298 and serine 378. Residues 475-548 enclose the HSA domain; that stretch reads PKRQNEMPRL…SKNKKPYMQE (74 aa). Residues 671–693 are disordered; the sequence is SFMEKKARSDENQLDGNKIKDDN. Residues 672 to 693 show a composition bias toward basic and acidic residues; sequence FMEKKARSDENQLDGNKIKDDN. Residues 713–773 form the Myb-like domain; sequence KDIRPEAPWL…DCFERWIQVD (61 aa). Disordered stretches follow at residues 857–880 and 975–994; these read TMTK…PSPL and EQIH…ERTQ. Residues 880-912 are a coiled coil; the sequence is LELSRLKSEREAQIQQIQAQRNFAQLQSQNRAL.

This sequence belongs to the EAF1 family. Component of the NuA4 histone acetyltransferase complex.

The protein localises to the nucleus. Functionally, component of the NuA4 histone acetyltransferase complex which is involved in transcriptional activation of selected genes principally by acetylation of nucleosomal histone H4 and H2A. The NuA4 complex is also involved in DNA repair. In Schizosaccharomyces pombe (strain 972 / ATCC 24843) (Fission yeast), this protein is Chromatin modification-related protein vid21 (vid21).